The sequence spans 312 residues: DNA primase small subunit PriS (312 aa).

Active-site residues include D88, D90, and D215.

The protein belongs to the eukaryotic-type primase small subunit family. In terms of assembly, heterodimer of a small subunit (PriS) and a large subunit (PriL). Requires Mg(2+) as cofactor. It depends on Mn(2+) as a cofactor.

Catalytic subunit of DNA primase, an RNA polymerase that catalyzes the synthesis of short RNA molecules used as primers for DNA polymerase during DNA replication. The small subunit contains the primase catalytic core and has DNA synthesis activity on its own. Binding to the large subunit stabilizes and modulates the activity, increasing the rate of DNA synthesis while decreasing the length of the DNA fragments, and conferring RNA synthesis capability. The DNA polymerase activity may enable DNA primase to also catalyze primer extension after primer synthesis. May also play a role in DNA repair. The protein is DNA primase small subunit PriS of Pyrobaculum islandicum (strain DSM 4184 / JCM 9189 / GEO3).